Here is a 170-residue protein sequence, read N- to C-terminus: TFIIB-type zinc finger protein (170 aa).

A TFIIB-type zinc finger spans residues 1-30 (MECPVCGSNEIVWDNKNGEVVCSNCGIIID). 4 residues coordinate Zn(2+): Cys3, Cys6, Cys22, and Cys25.

Belongs to the TFIIB family. The cofactor is Zn(2+).

The sequence is that of TFIIB-type zinc finger protein from Saccharolobus shibatae (strain ATCC 51178 / DSM 5389 / JCM 8931 / NBRC 15437 / B12) (Sulfolobus shibatae).